The sequence spans 205 residues: ATP phosphoribosyltransferase (205 aa).

This sequence belongs to the ATP phosphoribosyltransferase family. Short subfamily. Heteromultimer composed of HisG and HisZ subunits.

Its subcellular location is the cytoplasm. It catalyses the reaction 1-(5-phospho-beta-D-ribosyl)-ATP + diphosphate = 5-phospho-alpha-D-ribose 1-diphosphate + ATP. It participates in amino-acid biosynthesis; L-histidine biosynthesis; L-histidine from 5-phospho-alpha-D-ribose 1-diphosphate: step 1/9. Catalyzes the condensation of ATP and 5-phosphoribose 1-diphosphate to form N'-(5'-phosphoribosyl)-ATP (PR-ATP). Has a crucial role in the pathway because the rate of histidine biosynthesis seems to be controlled primarily by regulation of HisG enzymatic activity. This is ATP phosphoribosyltransferase from Leptospira borgpetersenii serovar Hardjo-bovis (strain JB197).